Consider the following 295-residue polypeptide: 4-hydroxybenzoate octaprenyltransferase (295 aa).

The next 8 helical transmembrane spans lie at 28–48 (PIGI…AADG), 55–75 (VLIF…INDF), 103–123 (WALF…TDPF), 147–167 (LPQL…FTAA), 175–195 (AWLI…YYAM), 219–239 (AIIL…GMRL), 241–261 (LGPY…WEFV), and 275–295 (FLHN…DYGI).

Belongs to the UbiA prenyltransferase family. The cofactor is Mg(2+).

It is found in the cell inner membrane. It catalyses the reaction all-trans-octaprenyl diphosphate + 4-hydroxybenzoate = 4-hydroxy-3-(all-trans-octaprenyl)benzoate + diphosphate. It functions in the pathway cofactor biosynthesis; ubiquinone biosynthesis. Its function is as follows. Catalyzes the prenylation of para-hydroxybenzoate (PHB) with an all-trans polyprenyl group. Mediates the second step in the final reaction sequence of ubiquinone-8 (UQ-8) biosynthesis, which is the condensation of the polyisoprenoid side chain with PHB, generating the first membrane-bound Q intermediate 3-octaprenyl-4-hydroxybenzoate. This Azotobacter vinelandii (strain DJ / ATCC BAA-1303) protein is 4-hydroxybenzoate octaprenyltransferase.